We begin with the raw amino-acid sequence, 97 residues long: Large ribosomal subunit protein bL28 (97 aa).

It belongs to the bacterial ribosomal protein bL28 family.

The polypeptide is Large ribosomal subunit protein bL28 (Rickettsia akari (strain Hartford)).